The chain runs to 267 residues: Small ribosomal subunit protein uS2 (267 aa).

The tract at residues 222 to 267 (GKALRDQDSEEEIQNKEQDEVSQEEKDDILDEAMNEEDFEIPEDKE) is disordered. Basic and acidic residues predominate over residues 223–240 (KALRDQDSEEEIQNKEQD). Acidic residues predominate over residues 241–267 (EVSQEEKDDILDEAMNEEDFEIPEDKE).

Belongs to the universal ribosomal protein uS2 family.

The polypeptide is Small ribosomal subunit protein uS2 (Campylobacter hominis (strain ATCC BAA-381 / DSM 21671 / CCUG 45161 / LMG 19568 / NCTC 13146 / CH001A)).